The primary structure comprises 378 residues: Cyclic GMP-AMP synthase-like receptor 1 (378 aa).

Residues Glu71, Asp73, and Asp187 each contribute to the Mg(2+) site. 71–73 (EFD) lines the ATP pocket. Residues Asp187 and 233–240 (TSSFYEAE) contribute to the GTP site. ATP is bound by residues 237-240 (YEAE), Lys258, and 271-275 (SYHIK).

This sequence belongs to the mab-21 family. Mg(2+) serves as cofactor. Mn(2+) is required as a cofactor.

The catalysed reaction is GTP + ATP = 3',2'-cGAMP + 2 diphosphate. The enzyme catalyses GTP + ATP = pppA(2'-5')pG + diphosphate. It carries out the reaction pppA(2'-5')pG = 3',2'-cGAMP + diphosphate. Its activity is regulated as follows. The enzyme activity is specifically activated by double-stranded RNA (dsRNA). Recognizes long dsRNA (&gt;30 bp) with no preference for 5' RNA phosphorylation. Nucleotidyltransferase that catalyzes the formation of cyclic GMP-AMP (3',2'-cGAMP) from ATP and GTP and plays a key role in antiviral innate immunity. Synthesizes 3',2'-cGAMP in a two-step reaction through production of the linear intermediate pppA(2'-5')pG. Acts as a key sensor of double-stranded RNA (dsRNA), the presence of dsRNA in the cytoplasm being a danger signal that triggers the immune responses. Directly binds dsRNA, activating the nucleotidyltransferase activity, leading to synthesis of 3',2'-cGAMP, a second messenger that binds to and activates Sting, thereby triggering the antiviral immune response via activation of the NF-kappa-B transcription factor Rel (Relish). 3',2'-cGAMP is protected from poxin cleavage. This is Cyclic GMP-AMP synthase-like receptor 1 from Drosophila melanogaster (Fruit fly).